We begin with the raw amino-acid sequence, 317 residues long: Melanocyte-stimulating hormone receptor (317 aa).

Residues 1-37 are Extracellular-facing; sequence MPMQGAQKRLLGSLNSTPTATPNLGLAANHTGAPCLE. N-linked (GlcNAc...) asparagine glycosylation occurs at Asn-29. Residues 38–63 traverse the membrane as a helical segment; it reads VSIPDGLFLSLGLVSLVENVLVVAAI. The Cytoplasmic portion of the chain corresponds to 64–72; sequence AKNRNLHSP. A helical membrane pass occupies residues 73–93; it reads MYCFICCLALSDLLVSSSNML. At 94–118 the chain is on the extracellular side; the sequence is ETAVILLLEAGALATRASVVQQLQN. Residues 119 to 140 form a helical membrane-spanning segment; sequence TIDVLTCSSMLCSLCFLGAIAV. The Cytoplasmic portion of the chain corresponds to 141–163; that stretch reads DRHVSIFYALRYHSIMTLARARR. Residues 164 to 183 form a helical membrane-spanning segment; the sequence is AIAAIWVASVLSSTLFIAYC. At 184 to 191 the chain is on the extracellular side; sequence DHAXVLLC. The chain crosses the membrane as a helical span at residues 192 to 211; the sequence is LVVFFLAMLVLMAVLYVHML. Residues 212 to 240 lie on the Cytoplasmic side of the membrane; sequence ARACQHAQGITRLHQRQPPAHQGFGFRGA. Residues 241–266 traverse the membrane as a helical segment; the sequence is ATLTILLGIFFLCWGPFFLHLTLVVL. Residues 267-279 lie on the Extracellular side of the membrane; that stretch reads CPQHLTCSCIFKN. A helical transmembrane segment spans residues 280 to 300; the sequence is FKVFLTLIICSTIIDPLIYAF. Topologically, residues 301 to 317 are cytoplasmic; it reads RSQELRRTLKELLLCSW. A lipid anchor (S-palmitoyl cysteine) is attached at Cys-315.

It belongs to the G-protein coupled receptor 1 family. In terms of assembly, interacts with MGRN1, but does not undergo MGRN1-mediated ubiquitination; this interaction competes with GNAS-binding and thus inhibits agonist-induced cAMP production. Interacts with OPN3; the interaction results in a decrease in MC1R-mediated cAMP signaling and ultimately a decrease in melanin production in melanocytes.

It localises to the cell membrane. Receptor for MSH (alpha, beta and gamma) and ACTH. The activity of this receptor is mediated by G proteins which activate adenylate cyclase. Mediates melanogenesis, the production of eumelanin (black/brown) and phaeomelanin (red/yellow), via regulation of cAMP signaling in melanocytes. The protein is Melanocyte-stimulating hormone receptor (MC1R) of Ateles paniscus (Black spider monkey).